A 74-amino-acid polypeptide reads, in one-letter code: Putative membrane protein insertion efficiency factor (74 aa).

It belongs to the UPF0161 family.

It is found in the cell inner membrane. Could be involved in insertion of integral membrane proteins into the membrane. In Blochmanniella floridana, this protein is Putative membrane protein insertion efficiency factor.